Reading from the N-terminus, the 264-residue chain is Thymidylate synthase (264 aa).

DUMP is bound at residue arginine 21. Histidine 51 serves as a coordination point for (6R)-5,10-methylene-5,6,7,8-tetrahydrofolate. 126-127 (RR) provides a ligand contact to dUMP. Cysteine 146 serves as the catalytic Nucleophile. Residues 166–169 (RSAD), asparagine 177, and 207–209 (HIY) contribute to the dUMP site. Aspartate 169 is a (6R)-5,10-methylene-5,6,7,8-tetrahydrofolate binding site. Alanine 263 serves as a coordination point for (6R)-5,10-methylene-5,6,7,8-tetrahydrofolate.

It belongs to the thymidylate synthase family. Bacterial-type ThyA subfamily. Homodimer.

It is found in the cytoplasm. It catalyses the reaction dUMP + (6R)-5,10-methylene-5,6,7,8-tetrahydrofolate = 7,8-dihydrofolate + dTMP. It participates in pyrimidine metabolism; dTTP biosynthesis. In terms of biological role, catalyzes the reductive methylation of 2'-deoxyuridine-5'-monophosphate (dUMP) to 2'-deoxythymidine-5'-monophosphate (dTMP) while utilizing 5,10-methylenetetrahydrofolate (mTHF) as the methyl donor and reductant in the reaction, yielding dihydrofolate (DHF) as a by-product. This enzymatic reaction provides an intracellular de novo source of dTMP, an essential precursor for DNA biosynthesis. This Brucella abortus (strain 2308) protein is Thymidylate synthase.